Consider the following 775-residue polypeptide: Meiotic driver SPOK2 (775 aa).

Residues 4 to 69 (KDRIAQLLRE…RCERERLQLE (66 aa)) adopt a coiled-coil conformation. 4 disordered regions span residues 18–51 (KARE…REEE), 211–249 (QKDD…YICS), 442–525 (LSSA…AMAD), and 734–761 (PPPK…AQLF). Residues 444-457 (SAPSSQNTDISEYT) are compositionally biased toward polar residues.

It is found in the cytoplasm. It localises to the nucleus. Functionally, promotes unequal transmission of alleles from the parental zygote to progeny spores by acting as poison/antidote system, leading to poisoning of progeny that do not inherit the allele. May possess DNA nuclease activity that leads to spore killing, and a kinase activity that confers resistance to the nuclease activity. In Podospora anserina (strain S / ATCC MYA-4624 / DSM 980 / FGSC 10383) (Pleurage anserina), this protein is Meiotic driver SPOK2.